The chain runs to 753 residues: MTILNHTLGFPRVGLRRELKKAQESYWAGNSTREELLAVGRELRARHWDQQKQAGIDLLPVGDFAWYDHVLTTSLLLGNVPARHQNNDGSVDIDTLFRIGRGRAPTGEPAAAAEMTKWFNTNYHYMVPEFVKGQQFKLTWTQLLEEVDEALALGHKVKPVLLGPVTYLWLGKVKGEQFDRLSLLNDILPVYQQVLAELAKRGIEWVQIDEPALVLELPQAWLDAYKPAYDALQGQVKLLLTTYFEGVTPNLDTITALPVQGLHVDLVHGKDDVAELHKRLPSEWLLSAGLINGRNVWRADLTEKYAQIKDIVGKRDLWVASSCSLLHSPIDLSVETRLDAEVKSWFAFALQKCHELALLRDALNSGDTAALAAWSAPIQARRHSTRVHNPAVEKRLAAITAQDSQRANVYEVRAEAQRARFKLPAWPTTTIGSFPQTTEIRTLRLDFKKGNLDANNYRTGIAEHIKQAIVEQERLGLDVLVHGEAERNDMVEYFGEHLDGFVFTQNGWVQSYGSRCVKPPIVIGDVSRPAPITVEWAKYAQSLTDKPVKGMLTGPVTILCWSFPREDVSRETIAKQIALALRDEVADLEAAGIGIIQIDEPALREGLPLRRSDWDAYLQWGVEAFRINAAVAKDDTQIHTHMCYCEFNDIMDSIAALDADVITIETSRSDMELLESFEEFDYPNEIGPGVYDIHSPNVPSVEWIEALLKKAAKRIPAERLWVNPDCGLKTRGWPETRAALANMVQAAQNLRRG.

5-methyltetrahydropteroyltri-L-glutamate contacts are provided by residues 17–20 (RELK) and lysine 117. L-homocysteine is bound by residues 431 to 433 (IGS) and glutamate 484. L-methionine is bound by residues 431–433 (IGS) and glutamate 484. 5-methyltetrahydropteroyltri-L-glutamate is bound by residues 515–516 (RC) and tryptophan 561. L-homocysteine is bound at residue aspartate 599. Residue aspartate 599 coordinates L-methionine. Glutamate 605 is a binding site for 5-methyltetrahydropteroyltri-L-glutamate. The Zn(2+) site is built by histidine 641, cysteine 643, and glutamate 665. Catalysis depends on histidine 694, which acts as the Proton donor. Cysteine 726 is a Zn(2+) binding site.

This sequence belongs to the vitamin-B12 independent methionine synthase family. Zn(2+) is required as a cofactor.

It catalyses the reaction 5-methyltetrahydropteroyltri-L-glutamate + L-homocysteine = tetrahydropteroyltri-L-glutamate + L-methionine. Its pathway is amino-acid biosynthesis; L-methionine biosynthesis via de novo pathway; L-methionine from L-homocysteine (MetE route): step 1/1. In terms of biological role, catalyzes the transfer of a methyl group from 5-methyltetrahydrofolate to homocysteine resulting in methionine formation. This Escherichia coli O7:K1 (strain IAI39 / ExPEC) protein is 5-methyltetrahydropteroyltriglutamate--homocysteine methyltransferase.